Consider the following 157-residue polypeptide: Cytochrome b6-f complex subunit 4 (157 aa).

3 helical membrane-spanning segments follow: residues 35–55, 94–114, and 130–150; these read ILYI…GLGV, LVGV…AFIE, and LVYL…VLGI.

This sequence belongs to the cytochrome b family. PetD subfamily. In terms of assembly, the 4 large subunits of the cytochrome b6-f complex are cytochrome b6, subunit IV (17 kDa polypeptide, petD), cytochrome f and the Rieske protein, while the 4 small subunits are petG, petL, petM and petN. The complex functions as a dimer.

It localises to the plastid. It is found in the chloroplast thylakoid membrane. Its function is as follows. Component of the cytochrome b6-f complex, which mediates electron transfer between photosystem II (PSII) and photosystem I (PSI), cyclic electron flow around PSI, and state transitions. The chain is Cytochrome b6-f complex subunit 4 from Amphidinium carterae (Dinoflagellate).